The sequence spans 409 residues: MSTVIKRPTRACVIGHVKIGGDAPVVVQSMTNTDTADYLATALQTAELARAGSELVRITVNSPEAAAAVPKIREHLDRMNCNVPLIGDFHYNGHRLLTEHPACAEALAKYRINPGNVGFGKKKDEQFAQMVELACKYDKPVRIGVNWGSLDQELLARVMDENSRRAEPLDATEMMRHAMVTSALESAAKAEEVGLASEKIILSCKVSSVQDLIAIYRDLSQRANYALHLGLTEAGMGSKGIVASTAALSVLLQEGIGDTIRVSLTPEPGGSRSQEVIVAQEILQTMGLRAFTPMVAACPGCGRTTSTFFQELAGEVQDFVRAKMPEWKLRYDGAENMTLAVMGCIVNGPGESKHANIGISLPGTGEAPSAPVYEDGEKTVTLKGDNIANEFKQIIERYVERTYTKKLKS.

[4Fe-4S] cluster is bound by residues C298, C301, C344, and E351.

The protein belongs to the IspG family. It depends on [4Fe-4S] cluster as a cofactor.

It catalyses the reaction (2E)-4-hydroxy-3-methylbut-2-enyl diphosphate + oxidized [flavodoxin] + H2O + 2 H(+) = 2-C-methyl-D-erythritol 2,4-cyclic diphosphate + reduced [flavodoxin]. Its pathway is isoprenoid biosynthesis; isopentenyl diphosphate biosynthesis via DXP pathway; isopentenyl diphosphate from 1-deoxy-D-xylulose 5-phosphate: step 5/6. Its function is as follows. Converts 2C-methyl-D-erythritol 2,4-cyclodiphosphate (ME-2,4cPP) into 1-hydroxy-2-methyl-2-(E)-butenyl 4-diphosphate. The protein is 4-hydroxy-3-methylbut-2-en-1-yl diphosphate synthase (flavodoxin) of Dechloromonas aromatica (strain RCB).